The primary structure comprises 604 residues: Probable translation initiation factor IF-2 (604 aa).

One can recognise a tr-type G domain in the interval 18–232 (IRTPIVCVLG…VLIGLAQRYM (215 aa)). The interval 27-34 (GHVDHGKT) is G1. 27–34 (GHVDHGKT) is a GTP binding site. Residues 52-56 (AITQH) are G2. The tract at residues 88-91 (DTPG) is G3. GTP is bound by residues 88-92 (DTPGH) and 142-145 (TKLD). Residues 142–145 (TKLD) are G4. The G5 stretch occupies residues 210-212 (SAH).

The protein belongs to the TRAFAC class translation factor GTPase superfamily. Classic translation factor GTPase family. IF-2 subfamily.

Functionally, function in general translation initiation by promoting the binding of the formylmethionine-tRNA to ribosomes. Seems to function along with eIF-2. The protein is Probable translation initiation factor IF-2 of Methanospirillum hungatei JF-1 (strain ATCC 27890 / DSM 864 / NBRC 100397 / JF-1).